The primary structure comprises 381 residues: E3 ubiquitin-protein ligase RNF34 (381 aa).

The segment at 56–107 adopts an FYVE-type zinc-finger fold; that stretch reads EGPNIVCKACGLSFSVFRKKHVCCDCKKDFCSLCSVSQENLRRCSTCHLLQE. In terms of domain architecture, SAP 1 spans 115–134; the sequence is LMRLKVKDLRQYLLLRNVPT. Position 169 is a phosphoserine (S169). A disordered region spans residues 216–261; the sequence is LASANTDDEDGEEDDDDDDDDDDEDDDEQEENLEEQNPGLSKKKAR. Positions 221–249 are enriched in acidic residues; it reads TDDEDGEEDDDDDDDDDDEDDDEQEENLE. 2 positions are modified to phosphoserine: S263 and S265. The SAP 2 domain occupies 273–287; that stretch reads VEGMSVRQLKEILAR. The RING-type zinc finger occupies 334–369; the sequence is CRICMDAVIDCVLLECGHMVTCTKCGKRMSECPICR.

In terms of assembly, interacts with CASP8 and CASP10. Interacts with p53/TP53; involved in p53/TP53 ubiquitination. Interacts (via RING-type zinc finger) with MDM2; the interaction stabilizes MDM2. Interacts (via RING-type zinc finger) with PPARGC1A. Interacts with NOD1. In terms of processing, proteolytically cleaved by caspases upon induction of apoptosis by TNF. Autoubiquitinated (in vitro). Ubiquitous. Detected in brain, cerebellum, midbrain, hippocampus, striatum, heart, lung, kidney, muscle, spleen and testis.

It is found in the cell membrane. It localises to the endomembrane system. Its subcellular location is the nucleus. The protein localises to the nucleus speckle. The protein resides in the cytoplasm. It is found in the cytosol. The catalysed reaction is S-ubiquitinyl-[E2 ubiquitin-conjugating enzyme]-L-cysteine + [acceptor protein]-L-lysine = [E2 ubiquitin-conjugating enzyme]-L-cysteine + N(6)-ubiquitinyl-[acceptor protein]-L-lysine.. It functions in the pathway protein modification; protein ubiquitination. In terms of biological role, E3 ubiquitin-protein ligase that regulates several biological processes through the ubiquitin-mediated proteasomal degradation of various target proteins. Ubiquitinates the caspases CASP8 and CASP10, promoting their proteasomal degradation, to negatively regulate cell death downstream of death domain receptors in the extrinsic pathway of apoptosis. May mediate 'Lys-48'-linked polyubiquitination of RIPK1 and its subsequent proteasomal degradation thereby indirectly regulating the tumor necrosis factor-mediated signaling pathway. Negatively regulates p53/TP53 through its direct ubiquitination and targeting to proteasomal degradation. Indirectly, may also negatively regulate p53/TP53 through ubiquitination and degradation of SFN. Mediates PPARGC1A proteasomal degradation probably through ubiquitination thereby indirectly regulating the metabolism of brown fat cells. Possibly involved in innate immunity, through 'Lys-48'-linked polyubiquitination of NOD1 and its subsequent proteasomal degradation. In Rattus norvegicus (Rat), this protein is E3 ubiquitin-protein ligase RNF34.